Consider the following 193-residue polypeptide: MNKDHEEQLEINEVSQKNKYKSIIESLLFMSGEPINIKDLATILNCKQDKVSSLLNEMNNSYVGKDRGIKILIHNRAVQLVTKPENSIYVEKLLKTNVRQSLSQAALETLSIIAYKQPITRVAIDEIRGVKSDRAIYTLLEKNIIKECGRLDVPGKPILYGTTEEFLKFFGLDSIEAIPNLEDLLKEFSKEEN.

This sequence belongs to the ScpB family. Homodimer. Homodimerization may be required to stabilize the binding of ScpA to the Smc head domains. Component of a cohesin-like complex composed of ScpA, ScpB and the Smc homodimer, in which ScpA and ScpB bind to the head domain of Smc. The presence of the three proteins is required for the association of the complex with DNA.

The protein localises to the cytoplasm. Participates in chromosomal partition during cell division. May act via the formation of a condensin-like complex containing Smc and ScpA that pull DNA away from mid-cell into both cell halves. The polypeptide is Segregation and condensation protein B (Clostridium botulinum (strain ATCC 19397 / Type A)).